The following is a 349-amino-acid chain: N-acetyltaurine hydrolase (349 aa).

A divalent metal cation-binding residues include histidine 26, histidine 28, glutamate 169, histidine 201, histidine 230, and aspartate 298.

This sequence belongs to the metallo-dependent hydrolases superfamily. Phosphotriesterase family. A divalent metal cation serves as cofactor.

The protein resides in the cytoplasm. It is found in the cytosol. It carries out the reaction N-acetyltaurine + H2O = taurine + acetate. It catalyses the reaction N-propanoyltaurine + H2O = propanoate + taurine. The enzyme catalyses N-acetyl-L-methionine + H2O = L-methionine + acetate. The catalysed reaction is N-acetyl-L-isoleucine + H2O = L-isoleucine + acetate. It carries out the reaction N-acetyl-L-leucine + H2O = L-leucine + acetate. It catalyses the reaction N-acetyl-L-valine + H2O = L-valine + acetate. In terms of biological role, N-acetyltaurine hydrolase that catalyzes the hydrolysis of N-acetyltaurine into taurine and acetate. PTER also acts on other N-acetyl amino acids (Met, Ile, Leu, Val) and N-propionyltaurine, but at lower rates. This is N-acetyltaurine hydrolase (pter) from Tetraodon nigroviridis (Spotted green pufferfish).